The following is a 364-amino-acid chain: Chorismate synthase (364 aa).

Residue R47 participates in NADP(+) binding. Residues 125–127 (RFS), G285, 300–304 (KPTPS), and R327 contribute to the FMN site.

The protein belongs to the chorismate synthase family. In terms of assembly, homotetramer. Requires FMNH2 as cofactor.

It carries out the reaction 5-O-(1-carboxyvinyl)-3-phosphoshikimate = chorismate + phosphate. The protein operates within metabolic intermediate biosynthesis; chorismate biosynthesis; chorismate from D-erythrose 4-phosphate and phosphoenolpyruvate: step 7/7. Catalyzes the anti-1,4-elimination of the C-3 phosphate and the C-6 proR hydrogen from 5-enolpyruvylshikimate-3-phosphate (EPSP) to yield chorismate, which is the branch point compound that serves as the starting substrate for the three terminal pathways of aromatic amino acid biosynthesis. This reaction introduces a second double bond into the aromatic ring system. This chain is Chorismate synthase, found in Dehalococcoides mccartyi (strain ATCC BAA-2100 / JCM 16839 / KCTC 5957 / BAV1).